The sequence spans 235 residues: 2-C-methyl-D-erythritol 4-phosphate cytidylyltransferase (235 aa).

The protein belongs to the IspD/TarI cytidylyltransferase family. IspD subfamily.

The catalysed reaction is 2-C-methyl-D-erythritol 4-phosphate + CTP + H(+) = 4-CDP-2-C-methyl-D-erythritol + diphosphate. It functions in the pathway isoprenoid biosynthesis; isopentenyl diphosphate biosynthesis via DXP pathway; isopentenyl diphosphate from 1-deoxy-D-xylulose 5-phosphate: step 2/6. In terms of biological role, catalyzes the formation of 4-diphosphocytidyl-2-C-methyl-D-erythritol from CTP and 2-C-methyl-D-erythritol 4-phosphate (MEP). The sequence is that of 2-C-methyl-D-erythritol 4-phosphate cytidylyltransferase from Pseudomonas fluorescens (strain ATCC BAA-477 / NRRL B-23932 / Pf-5).